The primary structure comprises 129 residues: Glycine cleavage system H protein (129 aa).

The 83-residue stretch at 24–106 folds into the Lipoyl-binding domain; that stretch reads LLKIGVSEFA…IGNGWLLIIK (83 aa). Lysine 65 carries the post-translational modification N6-lipoyllysine.

The protein belongs to the GcvH family. The glycine cleavage system is composed of four proteins: P, T, L and H. The cofactor is (R)-lipoate.

The glycine cleavage system catalyzes the degradation of glycine. The H protein shuttles the methylamine group of glycine from the P protein to the T protein. This is Glycine cleavage system H protein from Prochlorococcus marinus (strain MIT 9515).